The following is a 1272-amino-acid chain: AF4/FMR2 family member 2 (1272 aa).

Disordered regions lie at residues Ile93 to Asp183 and Pro200 to Glu223. Positions Ser97–Glu107 are enriched in polar residues. Over residues Ser151–His160 the composition is skewed to basic and acidic residues. A compositionally biased stretch (polar residues) spans Asn161 to Asp183. The span at Ala212–Glu223 shows a compositional bias: basic and acidic residues. Position 391 is a phosphoserine (Ser391). 4 disordered regions span residues Lys418–Leu491, Thr535–Glu687, Ser779–Lys829, and Pro842–Asn903. Pro residues predominate over residues Val426–Ala438. Low complexity predominate over residues Val439–Glu452. Thr478 bears the Phosphothreonine mark. The span at Glu543 to Arg558 shows a compositional bias: basic and acidic residues. The segment covering Ser576 to Thr586 has biased composition (polar residues). Over residues Pro616–Arg629 the composition is skewed to basic and acidic residues. Positions Gly630 to Ala640 are enriched in basic residues. Basic and acidic residues predominate over residues Pro818 to Lys829. Pro residues-rich tracts occupy residues Cys844–Pro853 and Phe874–Glu883.

It belongs to the AF4 family.

The protein resides in the nucleus speckle. Its function is as follows. RNA-binding protein. Might be involved in alternative splicing regulation through an interaction with G-quartet RNA structure. In Pongo pygmaeus (Bornean orangutan), this protein is AF4/FMR2 family member 2 (AFF2).